A 303-amino-acid polypeptide reads, in one-letter code: Golgi to ER traffic protein 2 (303 aa).

The Cytoplasmic segment spans residues M1–L168. Positions R19 to D86 are disordered. Residues R31–P48 are compositionally biased toward polar residues. A helical membrane pass occupies residues W169–Y189. Over L190–S216 the chain is Lumenal. A helical membrane pass occupies residues F217 to T236. At S237 to E280 the chain is on the cytoplasmic side. A helical transmembrane segment spans residues V281 to I301. At Y302 to N303 the chain is on the lumenal side.

The protein belongs to the GET2 family. As to quaternary structure, component of the Golgi to ER traffic (GET) complex, which is composed of GET1, GET2 and GET3. Within the complex, GET1 and GET2 form a heterotetramer which is stabilized by phosphatidylinositol binding and which binds to the GET3 homodimer.

It is found in the endoplasmic reticulum membrane. Its subcellular location is the golgi apparatus membrane. Its function is as follows. Required for the post-translational delivery of tail-anchored (TA) proteins to the endoplasmic reticulum. Together with GET1, acts as a membrane receptor for soluble GET3, which recognizes and selectively binds the transmembrane domain of TA proteins in the cytosol. The GET complex cooperates with the HDEL receptor ERD2 to mediate the ATP-dependent retrieval of resident ER proteins that contain a C-terminal H-D-E-L retention signal from the Golgi to the ER. The polypeptide is Golgi to ER traffic protein 2 (Debaryomyces hansenii (strain ATCC 36239 / CBS 767 / BCRC 21394 / JCM 1990 / NBRC 0083 / IGC 2968) (Yeast)).